The following is a 398-amino-acid chain: uncharacterized protein (398 aa).

One can recognise a BIG2 domain in the interval 240 to 306; sequence SLNKNIDQLI…SITVTTNDGS (67 aa).

This is an uncharacterized protein from Clostridium acetobutylicum (strain ATCC 824 / DSM 792 / JCM 1419 / IAM 19013 / LMG 5710 / NBRC 13948 / NRRL B-527 / VKM B-1787 / 2291 / W).